A 318-amino-acid polypeptide reads, in one-letter code: MDKIEKSFGKGSIMKMGEEVVEQVEVIPTGSIALNAALGVGGYPRGRIIEIYGPESSGKTTLAIHAIAEAQKAGGIAAFIDAEHAFDRFYAAKLGVDVDNLFISQPDNGEQALEIAEQLIRSSAIDIIVVDSVAALTPKAEIEGDMGDNKVGLQARLMSQALRKLTSAVSKTRTTCIFINQLREKIGVMFGNPETTTGGNALKFYASVRLDIRGSQQIKDGEEVIGKQTKVKVVKNKVAPPFRKAEFDIMFGEGISHSGEIIDLGADLGIIKKSGSWYSYNDTKLGQGRDAAKQCIADNPELAEELEGLIFEKLREHK.

53–60 (GPESSGKT) provides a ligand contact to ATP.

It belongs to the RecA family.

The protein resides in the cytoplasm. Its function is as follows. Can catalyze the hydrolysis of ATP in the presence of single-stranded DNA, the ATP-dependent uptake of single-stranded DNA by duplex DNA, and the ATP-dependent hybridization of homologous single-stranded DNAs. It interacts with LexA causing its activation and leading to its autocatalytic cleavage. The protein is Protein RecA of Bacteroides fragilis (strain YCH46).